Consider the following 149-residue polypeptide: Nucleoside diphosphate kinase (149 aa).

Residues lysine 9, phenylalanine 57, arginine 85, threonine 91, arginine 102, and asparagine 112 each coordinate ATP. Histidine 115 (pros-phosphohistidine intermediate) is an active-site residue.

This sequence belongs to the NDK family. Homotetramer. Mg(2+) is required as a cofactor.

The protein resides in the cytoplasm. The catalysed reaction is dZDP + ATP = dZTP + ADP. It carries out the reaction a 2'-deoxyribonucleoside 5'-diphosphate + ATP = a 2'-deoxyribonucleoside 5'-triphosphate + ADP. It catalyses the reaction a ribonucleoside 5'-diphosphate + ATP = a ribonucleoside 5'-triphosphate + ADP. It participates in purine metabolism. Major role in the synthesis of nucleoside triphosphates other than ATP. The ATP gamma phosphate is transferred to the NDP beta phosphate via a ping-pong mechanism, using a phosphorylated active-site intermediate. Its function is as follows. (Microbial infection) Catalyzes the phosphorylation of dZDP to dZTP, when the bacterium is infected by a phage that produces the substrate for the synthesis of dZTP (2- amino-2'-deoxyadenosine 5'-triphosphate), which is then used by the phage as a DNA polymerase substrate. The sequence is that of Nucleoside diphosphate kinase from Synechococcus sp. (strain JA-3-3Ab) (Cyanobacteria bacterium Yellowstone A-Prime).